Consider the following 235-residue polypeptide: Large ribosomal subunit protein uL1 (235 aa).

It belongs to the universal ribosomal protein uL1 family. Part of the 50S ribosomal subunit.

Its function is as follows. Binds directly to 23S rRNA. The L1 stalk is quite mobile in the ribosome, and is involved in E site tRNA release. Functionally, protein L1 is also a translational repressor protein, it controls the translation of the L11 operon by binding to its mRNA. The protein is Large ribosomal subunit protein uL1 of Mycolicibacterium smegmatis (strain ATCC 700084 / mc(2)155) (Mycobacterium smegmatis).